A 327-amino-acid chain; its full sequence is Undecaprenyl-phosphate 4-deoxy-4-formamido-L-arabinose transferase (327 aa).

2 consecutive transmembrane segments (helical) span residues 233 to 253 and 268 to 288; these read ILSL…LLLI and VFTL…GMGL.

The protein belongs to the glycosyltransferase 2 family.

The protein resides in the cell inner membrane. It catalyses the reaction UDP-4-deoxy-4-formamido-beta-L-arabinose + di-trans,octa-cis-undecaprenyl phosphate = 4-deoxy-4-formamido-alpha-L-arabinopyranosyl di-trans,octa-cis-undecaprenyl phosphate + UDP. The protein operates within glycolipid biosynthesis; 4-amino-4-deoxy-alpha-L-arabinose undecaprenyl phosphate biosynthesis; 4-amino-4-deoxy-alpha-L-arabinose undecaprenyl phosphate from UDP-4-deoxy-4-formamido-beta-L-arabinose and undecaprenyl phosphate: step 1/2. It functions in the pathway bacterial outer membrane biogenesis; lipopolysaccharide biosynthesis. Its function is as follows. Catalyzes the transfer of 4-deoxy-4-formamido-L-arabinose from UDP to undecaprenyl phosphate. The modified arabinose is attached to lipid A and is required for resistance to polymyxin and cationic antimicrobial peptides. The sequence is that of Undecaprenyl-phosphate 4-deoxy-4-formamido-L-arabinose transferase from Pectobacterium atrosepticum (strain SCRI 1043 / ATCC BAA-672) (Erwinia carotovora subsp. atroseptica).